A 293-amino-acid chain; its full sequence is Bifunctional protein FolD (293 aa).

Residues 164–166 (GRS), serine 193, and threonine 234 contribute to the NADP(+) site.

The protein belongs to the tetrahydrofolate dehydrogenase/cyclohydrolase family. Homodimer.

The enzyme catalyses (6R)-5,10-methylene-5,6,7,8-tetrahydrofolate + NADP(+) = (6R)-5,10-methenyltetrahydrofolate + NADPH. The catalysed reaction is (6R)-5,10-methenyltetrahydrofolate + H2O = (6R)-10-formyltetrahydrofolate + H(+). It participates in one-carbon metabolism; tetrahydrofolate interconversion. Its function is as follows. Catalyzes the oxidation of 5,10-methylenetetrahydrofolate to 5,10-methenyltetrahydrofolate and then the hydrolysis of 5,10-methenyltetrahydrofolate to 10-formyltetrahydrofolate. In Azobacteroides pseudotrichonymphae genomovar. CFP2, this protein is Bifunctional protein FolD.